The following is a 396-amino-acid chain: Tyrosine--tRNA ligase (396 aa).

Positions P39–H48 match the 'HIGH' region motif. The short motif at K223 to S227 is the 'KMSKS' region element. ATP is bound at residue K226. An S4 RNA-binding domain is found at L334–V395.

This sequence belongs to the class-I aminoacyl-tRNA synthetase family. TyrS type 2 subfamily. In terms of assembly, homodimer.

The protein resides in the cytoplasm. It catalyses the reaction tRNA(Tyr) + L-tyrosine + ATP = L-tyrosyl-tRNA(Tyr) + AMP + diphosphate + H(+). In terms of biological role, catalyzes the attachment of tyrosine to tRNA(Tyr) in a two-step reaction: tyrosine is first activated by ATP to form Tyr-AMP and then transferred to the acceptor end of tRNA(Tyr). The sequence is that of Tyrosine--tRNA ligase from Thiobacillus denitrificans (strain ATCC 25259 / T1).